Consider the following 343-residue polypeptide: Aspartate beta-hydroxylase domain-containing protein 2 (343 aa).

At 1–31 (MWLEWLVAWSWSLDGLRDCIATGIQSVRDCD) the chain is on the cytoplasmic side. A helical membrane pass occupies residues 32–52 (GTAVITVACLLVLFVWYCYHV). Topologically, residues 53-343 (GREQPRPHVS…ALDFIFAPGR (291 aa)) are lumenal. N-linked (GlcNAc...) asparagine glycosylation is found at Asn77 and Asn185. Residues Trp202 and Ser246 each coordinate 2-oxoglutarate. His257 serves as a coordination point for Fe cation. 266–268 (RCH) contacts 2-oxoglutarate. His302 contacts Fe cation. Arg315 contributes to the 2-oxoglutarate binding site.

Belongs to the aspartyl/asparaginyl beta-hydroxylase family. Fe cation serves as cofactor.

It localises to the membrane. May function as 2-oxoglutarate-dependent dioxygenase. The protein is Aspartate beta-hydroxylase domain-containing protein 2 (Asphd2) of Rattus norvegicus (Rat).